The primary structure comprises 379 residues: 1-deoxy-D-xylulose 5-phosphate reductoisomerase (379 aa).

Residues T10, G11, S12, I13, N39, and N121 each contribute to the NADPH site. A 1-deoxy-D-xylulose 5-phosphate-binding site is contributed by K122. E123 contributes to the NADPH binding site. Residue D147 participates in Mn(2+) binding. 4 residues coordinate 1-deoxy-D-xylulose 5-phosphate: S148, E149, S173, and H196. Residue E149 coordinates Mn(2+). G202 contacts NADPH. 1-deoxy-D-xylulose 5-phosphate contacts are provided by S209, N214, K215, and E218. Residue E218 coordinates Mn(2+).

The protein belongs to the DXR family. Mg(2+) serves as cofactor. Requires Mn(2+) as cofactor.

It carries out the reaction 2-C-methyl-D-erythritol 4-phosphate + NADP(+) = 1-deoxy-D-xylulose 5-phosphate + NADPH + H(+). The protein operates within isoprenoid biosynthesis; isopentenyl diphosphate biosynthesis via DXP pathway; isopentenyl diphosphate from 1-deoxy-D-xylulose 5-phosphate: step 1/6. In terms of biological role, catalyzes the NADPH-dependent rearrangement and reduction of 1-deoxy-D-xylulose-5-phosphate (DXP) to 2-C-methyl-D-erythritol 4-phosphate (MEP). The chain is 1-deoxy-D-xylulose 5-phosphate reductoisomerase from Chlamydia felis (strain Fe/C-56) (Chlamydophila felis).